The primary structure comprises 404 residues: Glycosylated lysosomal membrane protein B (404 aa).

Residues 1–24 (MSCTRGWRLILLGLLCVGLLGTRG) form the signal peptide. Residues 25 to 364 (QDESRKVSVQ…YGDPPRDSFS (340 aa)) are Lumenal-facing. 15 N-linked (GlcNAc...) asparagine glycosylation sites follow: Asn85, Asn124, Asn128, Asn142, Asn152, Asn156, Asn163, Asn168, Asn178, Asn189, Asn205, Asn221, Asn266, Asn303, and Asn330. A helical membrane pass occupies residues 365 to 385 (ILVICIMAVALGTPLLLLIIG). Residues 386-404 (TVLVTAVRHKVYPNYQPIN) are Cytoplasmic-facing. Positions 400 to 404 (YQPIN) match the Lysosomal targeting motif motif.

Belongs to the GLMP family. In terms of assembly, interacts (via lumenal domain) with lysosomal protein MFSD1; the interaction starts while both proteins are still in the endoplasmic reticulum and is required for stabilization of MFSD1 in lysosomes but has no direct effect on its targeting to lysosomes or transporter activity.

It is found in the lysosome membrane. Its function is as follows. Required to protect lysosomal transporter MFSD1 from lysosomal proteolysis and for MFSD1 lysosomal localization. This Xenopus laevis (African clawed frog) protein is Glycosylated lysosomal membrane protein B (glmp-b).